The chain runs to 397 residues: 1-deoxy-D-xylulose 5-phosphate reductoisomerase (397 aa).

Thr-10, Gly-11, Ser-12, Ile-13, Asn-38, and Asn-125 together coordinate NADPH. Lys-126 is a binding site for 1-deoxy-D-xylulose 5-phosphate. Glu-127 is an NADPH binding site. Residue Asp-151 coordinates Mn(2+). Ser-152, Glu-153, Ser-187, and His-210 together coordinate 1-deoxy-D-xylulose 5-phosphate. A Mn(2+)-binding site is contributed by Glu-153. Gly-216 serves as a coordination point for NADPH. 1-deoxy-D-xylulose 5-phosphate-binding residues include Ser-223, Asn-228, Lys-229, and Glu-232. Residue Glu-232 participates in Mn(2+) binding.

This sequence belongs to the DXR family. In terms of assembly, homodimer. The cofactor is Mg(2+). Mn(2+) serves as cofactor.

The catalysed reaction is 2-C-methyl-D-erythritol 4-phosphate + NADP(+) = 1-deoxy-D-xylulose 5-phosphate + NADPH + H(+). It functions in the pathway isoprenoid biosynthesis; isopentenyl diphosphate biosynthesis via DXP pathway; isopentenyl diphosphate from 1-deoxy-D-xylulose 5-phosphate: step 1/6. Catalyzes the NADPH-dependent rearrangement and reduction of 1-deoxy-D-xylulose-5-phosphate (DXP) to 2-C-methyl-D-erythritol 4-phosphate (MEP). The chain is 1-deoxy-D-xylulose 5-phosphate reductoisomerase from Blochmanniella pennsylvanica (strain BPEN).